A 220-amino-acid polypeptide reads, in one-letter code: RNA-free ribonuclease P (220 aa).

This sequence belongs to the HARP family.

The enzyme catalyses Endonucleolytic cleavage of RNA, removing 5'-extranucleotides from tRNA precursor.. Functionally, RNA-free RNase P that catalyzes the removal of the 5'-leader sequence from pre-tRNA to produce the mature 5'-terminus. The chain is RNA-free ribonuclease P from Methanothermobacter thermautotrophicus (strain ATCC 29096 / DSM 1053 / JCM 10044 / NBRC 100330 / Delta H) (Methanobacterium thermoautotrophicum).